We begin with the raw amino-acid sequence, 272 residues long: Peptidoglycolipid exporter Gap (272 aa).

Transmembrane regions (helical) follow at residues 5 to 25, 36 to 56, 79 to 99, 171 to 191, 206 to 226, and 252 to 272; these read ILGL…ILLV, VVFW…PLFV, IEPF…VIAL, LWVA…VLLV, IIAV…TLLS, and ILLV…LGVI.

The protein belongs to the peptidoglycolipid addressing protein (GAP) (TC 2.A.116) family.

The protein localises to the cell inner membrane. Functionally, required for the transport of peptidoglycolipids (GPLs) to the cell surface. In Mycolicibacterium smegmatis (strain ATCC 700084 / mc(2)155) (Mycobacterium smegmatis), this protein is Peptidoglycolipid exporter Gap.